The following is a 122-amino-acid chain: Large ribosomal subunit protein uL14 (122 aa).

It belongs to the universal ribosomal protein uL14 family. In terms of assembly, part of the 50S ribosomal subunit. Forms a cluster with proteins L3 and L19. In the 70S ribosome, L14 and L19 interact and together make contacts with the 16S rRNA in bridges B5 and B8.

Its function is as follows. Binds to 23S rRNA. Forms part of two intersubunit bridges in the 70S ribosome. The protein is Large ribosomal subunit protein uL14 of Desulfotalea psychrophila (strain LSv54 / DSM 12343).